A 285-amino-acid chain; its full sequence is Protease HtpX homolog (285 aa).

Helical transmembrane passes span 7–27 (TAML…MIGG) and 30–50 (GMTI…WFSD). Residue His131 coordinates Zn(2+). The active site involves Glu132. His135 serves as a coordination point for Zn(2+). Helical transmembrane passes span 146–166 (ITAT…FFGG) and 177–197 (IAGI…QMAI). Glu202 is a binding site for Zn(2+).

The protein belongs to the peptidase M48B family. The cofactor is Zn(2+).

Its subcellular location is the cell inner membrane. The sequence is that of Protease HtpX homolog from Burkholderia cenocepacia (strain ATCC BAA-245 / DSM 16553 / LMG 16656 / NCTC 13227 / J2315 / CF5610) (Burkholderia cepacia (strain J2315)).